The sequence spans 222 residues: GTP cyclohydrolase 1 (222 aa).

3 residues coordinate Zn(2+): Cys111, His114, and Cys182.

It belongs to the GTP cyclohydrolase I family. As to quaternary structure, homomer.

It carries out the reaction GTP + H2O = 7,8-dihydroneopterin 3'-triphosphate + formate + H(+). It participates in cofactor biosynthesis; 7,8-dihydroneopterin triphosphate biosynthesis; 7,8-dihydroneopterin triphosphate from GTP: step 1/1. This Salmonella gallinarum (strain 287/91 / NCTC 13346) protein is GTP cyclohydrolase 1.